We begin with the raw amino-acid sequence, 281 residues long: Bifunctional protein FolD (281 aa).

Residues 164 to 166, Ser189, and Thr230 each bind NADP(+); that span reads GRS.

It belongs to the tetrahydrofolate dehydrogenase/cyclohydrolase family. In terms of assembly, homodimer.

It carries out the reaction (6R)-5,10-methylene-5,6,7,8-tetrahydrofolate + NADP(+) = (6R)-5,10-methenyltetrahydrofolate + NADPH. It catalyses the reaction (6R)-5,10-methenyltetrahydrofolate + H2O = (6R)-10-formyltetrahydrofolate + H(+). Its pathway is one-carbon metabolism; tetrahydrofolate interconversion. In terms of biological role, catalyzes the oxidation of 5,10-methylenetetrahydrofolate to 5,10-methenyltetrahydrofolate and then the hydrolysis of 5,10-methenyltetrahydrofolate to 10-formyltetrahydrofolate. This chain is Bifunctional protein FolD, found in Dictyoglomus turgidum (strain DSM 6724 / Z-1310).